Reading from the N-terminus, the 388-residue chain is Pectin acetylesterase 1 (388 aa).

The N-terminal stretch at 1 to 24 (MKTLLYWGWSSLAGLILFSILAHG) is a signal peptide. Residues Asn30 and Asn33 are each glycosylated (N-linked (GlcNAc...) asparagine). Catalysis depends on charge relay system residues Ser187 and Asp283. Asn304 carries N-linked (GlcNAc...) asparagine glycosylation. The active-site Charge relay system is His349.

Belongs to the pectinacetylesterase family.

The protein resides in the secreted. It is found in the cell wall. Functionally, hydrolyzes acetyl esters in homogalacturonan regions of pectin. In type I primary cell wall, galacturonic acid residues of pectin can be acetylated at the O-2 and O-3 positions. Decreasing the degree of acetylation of pectin gels in vitro alters their physical properties. This Arabidopsis thaliana (Mouse-ear cress) protein is Pectin acetylesterase 1.